Here is a 405-residue protein sequence, read N- to C-terminus: 3-isopropylmalate dehydrogenase 2, chloroplastic (405 aa).

A chloroplast-targeting transit peptide spans M1–C33. S70 bears the Phosphoserine mark. I114–E129 contributes to the NAD(+) binding site. Positions 136, 146, and 174 each coordinate substrate. NAD(+) is bound at residue N234. Substrate is bound at residue D264. Residue D264 coordinates Mg(2+). Residue N265 coordinates NAD(+). Positions 288 and 292 each coordinate Mg(2+). E318–N334 contributes to the NAD(+) binding site.

This sequence belongs to the isocitrate and isopropylmalate dehydrogenases family. In terms of assembly, homodimer. Mg(2+) is required as a cofactor. Mn(2+) serves as cofactor. Expressed at low levels in seedlings, cotyledons, hypocotyls, flowers, roots, pollen, leaves and stems.

It is found in the plastid. The protein resides in the chloroplast stroma. It carries out the reaction (2R,3S)-3-isopropylmalate + NAD(+) = 4-methyl-2-oxopentanoate + CO2 + NADH. It functions in the pathway amino-acid biosynthesis; L-leucine biosynthesis; L-leucine from 3-methyl-2-oxobutanoate: step 3/4. Regulated by a thiol-based redox modification. Functionally, involved in leucine biosynthesis; catalyzes the oxidative decarboxylation step in leucine biosynthesis (primary metabolism). Catalyzes the oxidation of 3-carboxy-2-hydroxy-4-methylpentanoate (3-isopropylmalate, 3-IPM) to 3-carboxy-4-methyl-2-oxopentanoate. The product decarboxylates to 4-methyl-2 oxopentanoate. Required during pollen development and involved in embryo sac development. The chain is 3-isopropylmalate dehydrogenase 2, chloroplastic from Arabidopsis thaliana (Mouse-ear cress).